Here is a 673-residue protein sequence, read N- to C-terminus: Glycine--tRNA ligase beta subunit (673 aa).

This sequence belongs to the class-II aminoacyl-tRNA synthetase family. Tetramer of two alpha and two beta subunits.

The protein localises to the cytoplasm. The enzyme catalyses tRNA(Gly) + glycine + ATP = glycyl-tRNA(Gly) + AMP + diphosphate. In Lactococcus lactis subsp. cremoris (strain MG1363), this protein is Glycine--tRNA ligase beta subunit.